A 226-amino-acid chain; its full sequence is Phosphoribosylformylglycinamidine synthase subunit PurQ (226 aa).

One can recognise a Glutamine amidotransferase type-1 domain in the interval 2 to 225 (RFGIVVFPGS…MHYLEGGKNN (224 aa)). The active-site Nucleophile is the cysteine 86. Catalysis depends on residues histidine 194 and glutamate 196.

As to quaternary structure, part of the FGAM synthase complex composed of 1 PurL, 1 PurQ and 2 PurS subunits.

The protein localises to the cytoplasm. The enzyme catalyses N(2)-formyl-N(1)-(5-phospho-beta-D-ribosyl)glycinamide + L-glutamine + ATP + H2O = 2-formamido-N(1)-(5-O-phospho-beta-D-ribosyl)acetamidine + L-glutamate + ADP + phosphate + H(+). It catalyses the reaction L-glutamine + H2O = L-glutamate + NH4(+). The protein operates within purine metabolism; IMP biosynthesis via de novo pathway; 5-amino-1-(5-phospho-D-ribosyl)imidazole from N(2)-formyl-N(1)-(5-phospho-D-ribosyl)glycinamide: step 1/2. Functionally, part of the phosphoribosylformylglycinamidine synthase complex involved in the purines biosynthetic pathway. Catalyzes the ATP-dependent conversion of formylglycinamide ribonucleotide (FGAR) and glutamine to yield formylglycinamidine ribonucleotide (FGAM) and glutamate. The FGAM synthase complex is composed of three subunits. PurQ produces an ammonia molecule by converting glutamine to glutamate. PurL transfers the ammonia molecule to FGAR to form FGAM in an ATP-dependent manner. PurS interacts with PurQ and PurL and is thought to assist in the transfer of the ammonia molecule from PurQ to PurL. This chain is Phosphoribosylformylglycinamidine synthase subunit PurQ, found in Alkaliphilus metalliredigens (strain QYMF).